The chain runs to 483 residues: Regulatory protein ViaA (483 aa).

This sequence belongs to the ViaA family. As to quaternary structure, homodimer. Interacts with RavA.

It is found in the cytoplasm. Functionally, component of the RavA-ViaA chaperone complex, which may act on the membrane to optimize the function of some of the respiratory chains. ViaA stimulates the ATPase activity of RavA. The polypeptide is Regulatory protein ViaA (Escherichia coli O6:K15:H31 (strain 536 / UPEC)).